A 347-amino-acid chain; its full sequence is MARFWVCVAGAGFFLAFLVLHSRFCGSPVLRNFTFAVSWRTEKILYRLDVGWPKHPEYFTGTTFCVAVDSLNGLVYIGQRGDNIPKILVFTEDGYFLRAWNYTVDTPHGIFAASTLYEQSVWITDVGSGFFGHTVKKYSSFGDLVQVLGTPGKKGTSLNPLQFDNPAELYVEDTGDIYIVDGDGGLNNRLIKLSQDFMILWLHGENGTGPAKFNIPHSVTLDSAGRVWVADRGNKRIQVFDKDTGEWLGAWNNCFTEEGPSSVRFTPDGKYLIVAQLNLSRLSVVAAPPVGSIGECSVISTIQLADQVLPHLLEVDRKTGAVYVAEIGAKQVQKYVPLNSYVPSFGS.

Residues 1 to 25 (MARFWVCVAGAGFFLAFLVLHSRFC) form the signal peptide. N32 is a glycosylation site (N-linked (GlcNAc...) asparagine). An NHL 1 repeat occupies 47 to 93 (RLDVGWPKHPEYFTGTTFCVAVDSLNGLVYIGQRGDNIPKILVFTED). N-linked (GlcNAc...) asparagine glycosylation is present at N101. NHL repeat units follow at residues 150–196 (TPGK…LSQD) and 200–243 (LWLH…FDKD). N206 and N278 each carry an N-linked (GlcNAc...) asparagine glycan. An NHL 4 repeat occupies 294-338 (GECSVISTIQLADQVLPHLLEVDRKTGAVYVAEIGAKQVQKYVPL).

The protein resides in the secreted. This is NHL repeat-containing protein 3 (NHLRC3) from Homo sapiens (Human).